Here is a 239-residue protein sequence, read N- to C-terminus: Small ribosomal subunit protein eS4 (239 aa).

The region spanning 37–99 (IPLAVVIRDY…ADLYFRVIPD (63 aa)) is the S4 RNA-binding domain.

It belongs to the eukaryotic ribosomal protein eS4 family.

The sequence is that of Small ribosomal subunit protein eS4 from Saccharolobus islandicus (strain Y.N.15.51 / Yellowstone #2) (Sulfolobus islandicus).